We begin with the raw amino-acid sequence, 901 residues long: HTH-type transcriptional regulator MalT (901 aa).

Residue 39–46 participates in ATP binding; the sequence is SPAGYGKT. In terms of domain architecture, HTH luxR-type spans 829–894; that stretch reads ELIRTSPLTQ…DAVQHAQQLL (66 aa). Positions 853-872 form a DNA-binding region, H-T-H motif; sequence NEQIAGELAVAATTIKTHIR.

It belongs to the MalT family. In terms of assembly, monomer in solution. Oligomerizes to an active state in the presence of the positive effectors ATP and maltotriose.

With respect to regulation, activated by ATP and maltotriose, which are both required for DNA binding. In terms of biological role, positively regulates the transcription of the maltose regulon whose gene products are responsible for uptake and catabolism of malto-oligosaccharides. Specifically binds to the promoter region of its target genes, recognizing a short DNA motif called the MalT box. This chain is HTH-type transcriptional regulator MalT, found in Salmonella typhimurium (strain LT2 / SGSC1412 / ATCC 700720).